The chain runs to 933 residues: Protein translocase subunit SecA (933 aa).

ATP contacts are provided by residues glutamine 90, 108-112 (GEGKT), and aspartate 504. Positions 539–570 (GMGSNNRRPQGFGQDSKKKKWQPSADIFPTDL) are disordered.

This sequence belongs to the SecA family. As to quaternary structure, monomer and homodimer. Part of the essential Sec protein translocation apparatus which comprises SecA, SecYEG and auxiliary proteins SecDF. Other proteins may also be involved.

It is found in the cell inner membrane. It localises to the cellular thylakoid membrane. The protein localises to the cytoplasm. The enzyme catalyses ATP + H2O + cellular proteinSide 1 = ADP + phosphate + cellular proteinSide 2.. Functionally, part of the Sec protein translocase complex. Interacts with the SecYEG preprotein conducting channel. Has a central role in coupling the hydrolysis of ATP to the transfer of proteins into and across the cell membrane, serving as an ATP-driven molecular motor driving the stepwise translocation of polypeptide chains across the membrane. In terms of biological role, probably participates in protein translocation into and across both the cytoplasmic and thylakoid membranes in cyanobacterial cells. This is Protein translocase subunit SecA from Crocosphaera subtropica (strain ATCC 51142 / BH68) (Cyanothece sp. (strain ATCC 51142)).